The sequence spans 444 residues: Serine carboxypeptidase-like 50 (444 aa).

A signal peptide spans 1 to 22 (MEQATTLFILLSTLLLAVSVES). Cys-79 and Cys-308 form a disulfide bridge. Ser-170 is an active-site residue. N-linked (GlcNAc...) asparagine glycosylation is present at Asn-263. The active site involves Asp-345. A glycan (N-linked (GlcNAc...) asparagine) is linked at Asn-361. Residue His-403 is part of the active site.

The protein belongs to the peptidase S10 family. In terms of tissue distribution, ubiquitous.

The protein localises to the secreted. Probable carboxypeptidase. The chain is Serine carboxypeptidase-like 50 (SCPL50) from Arabidopsis thaliana (Mouse-ear cress).